A 96-amino-acid chain; its full sequence is Molybdopterin synthase sulfur carrier subunit (96 aa).

G96 is subject to 1-thioglycine; alternate. A Glycyl adenylate; alternate modification is found at G96.

The protein belongs to the MoaD family. MOCS2A subfamily. As to quaternary structure, heterotetramer; composed of 2 small (MOCS2A) and 2 large (MOCS2B) subunits. C-terminal thiocarboxylation occurs in 2 steps, it is first acyl-adenylated (-COAMP) via the hesA/moeB/thiF part of MOCS3, then thiocarboxylated (-COSH) via the rhodanese domain of MOCS3.

The protein resides in the cytoplasm. It functions in the pathway cofactor biosynthesis; molybdopterin biosynthesis. In terms of biological role, acts as a sulfur carrier required for molybdopterin biosynthesis. Component of the molybdopterin synthase complex that catalyzes the conversion of precursor Z into molybdopterin by mediating the incorporation of 2 sulfur atoms into precursor Z to generate a dithiolene group. In the complex, serves as sulfur donor by being thiocarboxylated (-COSH) at its C-terminus by MOCS3. After interaction with MOCS2B, the sulfur is then transferred to precursor Z to form molybdopterin. The polypeptide is Molybdopterin synthase sulfur carrier subunit (Arabidopsis thaliana (Mouse-ear cress)).